Consider the following 170-residue polypeptide: Photosystem I assembly protein Ycf3 (170 aa).

TPR repeat units follow at residues 35–68, 72–105, and 120–153; these read AFCY…EEDP, SYII…NPRL, and GLKA…APNN.

Belongs to the Ycf3 family.

It is found in the plastid. It localises to the chloroplast thylakoid membrane. In terms of biological role, essential for the assembly of the photosystem I (PSI) complex. May act as a chaperone-like factor to guide the assembly of the PSI subunits. The chain is Photosystem I assembly protein Ycf3 from Gracilaria tenuistipitata var. liui (Red alga).